We begin with the raw amino-acid sequence, 273 residues long: Cell division protein FtsQ (273 aa).

Residues 1-10 (MWNDARTINL) lie on the Cytoplasmic side of the membrane. The helical transmembrane segment at 11-31 (IANTLAVLAVAAMLLAGVAWV) threads the bilayer. The Periplasmic segment spans residues 32-273 (AQRPYFTLAA…HSKSKPAKKR (242 aa)). The 74-residue stretch at 37 to 110 (FTLAAIEIES…NTLRVRVEEQ (74 aa)) folds into the POTRA domain.

Belongs to the FtsQ/DivIB family. FtsQ subfamily. Part of a complex composed of FtsB, FtsL and FtsQ.

It localises to the cell inner membrane. Functionally, essential cell division protein. May link together the upstream cell division proteins, which are predominantly cytoplasmic, with the downstream cell division proteins, which are predominantly periplasmic. May control correct divisome assembly. The chain is Cell division protein FtsQ from Bordetella pertussis (strain Tohama I / ATCC BAA-589 / NCTC 13251).